A 257-amino-acid polypeptide reads, in one-letter code: 4-hydroxy-tetrahydrodipicolinate reductase (257 aa).

An NAD(+)-binding site is contributed by glycine 7–methionine 12. Arginine 34 provides a ligand contact to NADP(+). Residues glycine 96–threonine 98 and serine 117–methionine 120 each bind NAD(+). Catalysis depends on histidine 149, which acts as the Proton donor/acceptor. Histidine 150 contributes to the (S)-2,3,4,5-tetrahydrodipicolinate binding site. Residue lysine 153 is the Proton donor of the active site. Glycine 159–threonine 160 is a (S)-2,3,4,5-tetrahydrodipicolinate binding site.

This sequence belongs to the DapB family.

It localises to the cytoplasm. It catalyses the reaction (S)-2,3,4,5-tetrahydrodipicolinate + NAD(+) + H2O = (2S,4S)-4-hydroxy-2,3,4,5-tetrahydrodipicolinate + NADH + H(+). The enzyme catalyses (S)-2,3,4,5-tetrahydrodipicolinate + NADP(+) + H2O = (2S,4S)-4-hydroxy-2,3,4,5-tetrahydrodipicolinate + NADPH + H(+). It participates in amino-acid biosynthesis; L-lysine biosynthesis via DAP pathway; (S)-tetrahydrodipicolinate from L-aspartate: step 4/4. In terms of biological role, catalyzes the conversion of 4-hydroxy-tetrahydrodipicolinate (HTPA) to tetrahydrodipicolinate. The sequence is that of 4-hydroxy-tetrahydrodipicolinate reductase from Anaplasma marginale (strain St. Maries).